The following is a 201-amino-acid chain: Oligoribonuclease (201 aa).

One can recognise an Exonuclease domain in the interval 5 to 169 (MVWIDCEMTG…ADIRDSITEL (165 aa)). Tyrosine 126 is an active-site residue.

It belongs to the oligoribonuclease family.

It is found in the cytoplasm. Functionally, 3'-to-5' exoribonuclease specific for small oligoribonucleotides. This Streptomyces griseus protein is Oligoribonuclease.